The following is a 334-amino-acid chain: Dihydroorotate dehydrogenase (quinone) (334 aa).

FMN-binding positions include 59-63 (AGLDK) and Thr-83. Lys-63 is a substrate binding site. Position 108–112 (108–112 (NRMGF)) interacts with substrate. Positions 136 and 169 each coordinate FMN. Asn-169 provides a ligand contact to substrate. Ser-172 acts as the Nucleophile in catalysis. A substrate-binding site is contributed by Asn-174. FMN contacts are provided by Lys-214 and Thr-242. Position 243–244 (243–244 (NT)) interacts with substrate. Residues Gly-265, Gly-294, and 315 to 316 (YS) contribute to the FMN site.

It belongs to the dihydroorotate dehydrogenase family. Type 2 subfamily. As to quaternary structure, monomer. FMN is required as a cofactor.

Its subcellular location is the cell membrane. It catalyses the reaction (S)-dihydroorotate + a quinone = orotate + a quinol. It functions in the pathway pyrimidine metabolism; UMP biosynthesis via de novo pathway; orotate from (S)-dihydroorotate (quinone route): step 1/1. In terms of biological role, catalyzes the conversion of dihydroorotate to orotate with quinone as electron acceptor. This Acinetobacter baumannii (strain AB0057) protein is Dihydroorotate dehydrogenase (quinone).